Reading from the N-terminus, the 189-residue chain is Mediator of RNA polymerase II transcription subunit 10b (189 aa).

The tract at residues 1–22 (MDPTQNTSAGIGGSNGTIRYQT) is disordered.

This sequence belongs to the Mediator complex subunit 10 family. As to quaternary structure, component of the Mediator complex.

It is found in the nucleus. Its function is as follows. Component of the Mediator complex, a coactivator involved in the regulated transcription of nearly all RNA polymerase II-dependent genes. Mediator functions as a bridge to convey information from gene-specific regulatory proteins to the basal RNA polymerase II transcription machinery. The Mediator complex, having a compact conformation in its free form, is recruited to promoters by direct interactions with regulatory proteins and serves for the assembly of a functional preinitiation complex with RNA polymerase II and the general transcription factors. In Arabidopsis thaliana (Mouse-ear cress), this protein is Mediator of RNA polymerase II transcription subunit 10b (MED10B).